Consider the following 259-residue polypeptide: Small ribosomal subunit protein eS1 (259 aa).

N-acetylalanine; partial is present on alanine 2.

This sequence belongs to the eukaryotic ribosomal protein eS1 family. In terms of assembly, component of the small ribosomal subunit. Mature ribosomes consist of a small (40S) and a large (60S) subunit. The 40S subunit contains about 33 different proteins and 1 molecule of RNA (18S). The 60S subunit contains about 49 different proteins and 3 molecules of RNA (25S, 5.8S and 5S).

Its subcellular location is the cytoplasm. The sequence is that of Small ribosomal subunit protein eS1 from Cryptococcus neoformans var. neoformans serotype D (strain B-3501A) (Filobasidiella neoformans).